The following is a 182-amino-acid chain: uncharacterized protein (182 aa).

It to M.tuberculosis Rv2313c.

This is an uncharacterized protein from Escherichia coli (strain K12).